Reading from the N-terminus, the 253-residue chain is Proteasome subunit alpha (253 aa).

The disordered stretch occupies residues 229–253 (ADESQSYIDDIEDAADDSDDDDDEE). Residues 237-253 (DDIEDAADDSDDDDDEE) show a composition bias toward acidic residues.

The protein belongs to the peptidase T1A family. The 20S proteasome core is composed of 14 alpha and 14 beta subunits that assemble into four stacked heptameric rings, resulting in a barrel-shaped structure. The two inner rings, each composed of seven catalytic beta subunits, are sandwiched by two outer rings, each composed of seven alpha subunits. The catalytic chamber with the active sites is on the inside of the barrel. Has a gated structure, the ends of the cylinder being occluded by the N-termini of the alpha-subunits. Is capped at one or both ends by the proteasome regulatory ATPase, PAN.

It is found in the cytoplasm. The formation of the proteasomal ATPase PAN-20S proteasome complex, via the docking of the C-termini of PAN into the intersubunit pockets in the alpha-rings, triggers opening of the gate for substrate entry. Interconversion between the open-gate and close-gate conformations leads to a dynamic regulation of the 20S proteasome proteolysis activity. Component of the proteasome core, a large protease complex with broad specificity involved in protein degradation. The polypeptide is Proteasome subunit alpha (Halobacterium salinarum (strain ATCC 29341 / DSM 671 / R1)).